A 224-amino-acid chain; its full sequence is MAPPAAPGRDRVGREDEDGWETRGDRKARKPLVEKKRRARINESLQELRLLLAGAEVQAKLENAEVLELTVRRVQGVLRGRAREREQLQAEASERFAAGYIQCMHEVHTFVSTCQAIDATVAAELLNHLLESMPLREGSSFQDLLGDALAGPPRAPGRSGWPAGGAPGSPIPSPPGPGDDLCSDLEEAPEAELSQAPAEGPDLVPAALGSLTTAQIARSVWRPW.

Residues 1–31 (MAPPAAPGRDRVGREDEDGWETRGDRKARKP) are disordered. The segment covering 8 to 25 (GRDRVGREDEDGWETRGD) has biased composition (basic and acidic residues). Residues 25–77 (DRKARKPLVEKKRRARINESLQELRLLLAGAEVQAKLENAEVLELTVRRVQGV) enclose the bHLH domain. The 34-residue stretch at 96-129 (FAAGYIQCMHEVHTFVSTCQAIDATVAAELLNHL) folds into the Orange domain. A compositionally biased stretch (low complexity) spans 147-161 (DALAGPPRAPGRSGW). The segment at 147 to 205 (DALAGPPRAPGRSGWPAGGAPGSPIPSPPGPGDDLCSDLEEAPEAELSQAPAEGPDLVP) is disordered. A compositionally biased stretch (acidic residues) spans 181-190 (LCSDLEEAPE). A WRPW motif motif is present at residues 221 to 224 (WRPW).

As to quaternary structure, transcription repression requires formation of a complex with a corepressor protein of the Groucho/TLE family. Interacts with HES1.

It is found in the nucleus. Does not bind DNA itself but suppresses both HES1-mediated N box-dependent transcriptional repression and binding of HES1 to E box sequences. Also suppresses HES1-mediated inhibition of the heterodimer formed by ASCL1/MASH1 and TCF3/E47, allowing ASCL1 and TCF3 to up-regulate transcription in its presence. Promotes cell differentiation. In Homo sapiens (Human), this protein is Transcription cofactor HES-6.